We begin with the raw amino-acid sequence, 272 residues long: 3-methyl-2-oxobutanoate hydroxymethyltransferase (272 aa).

Residues D50 and D89 each contribute to the Mg(2+) site. Residues 50–51 (DS), D89, and K119 each bind 3-methyl-2-oxobutanoate. A Mg(2+)-binding site is contributed by E121. Catalysis depends on E188, which acts as the Proton acceptor.

This sequence belongs to the PanB family. Homodecamer; pentamer of dimers. Mg(2+) serves as cofactor.

It is found in the cytoplasm. It carries out the reaction 3-methyl-2-oxobutanoate + (6R)-5,10-methylene-5,6,7,8-tetrahydrofolate + H2O = 2-dehydropantoate + (6S)-5,6,7,8-tetrahydrofolate. The protein operates within cofactor biosynthesis; (R)-pantothenate biosynthesis; (R)-pantoate from 3-methyl-2-oxobutanoate: step 1/2. In terms of biological role, catalyzes the reversible reaction in which hydroxymethyl group from 5,10-methylenetetrahydrofolate is transferred onto alpha-ketoisovalerate to form ketopantoate. In Methylobacterium radiotolerans (strain ATCC 27329 / DSM 1819 / JCM 2831 / NBRC 15690 / NCIMB 10815 / 0-1), this protein is 3-methyl-2-oxobutanoate hydroxymethyltransferase.